Consider the following 216-residue polypeptide: MAYQIDQKMIHDQEPMAEIMPNVITAMSSLLQRVSETNDDLSRPFREHKRISAFNAVTKPSISIRSYMERIFKYADCSDSCYIVAYIYLDRFIQKQPLLPIDSSNVHRLIITSVLVSAKFMDDLCYNNAFYAKVGGITTEEMNLLELDFLFGIGFQLNVTISTYNDYCSSLQREMVMRTMYSPLLEPAFLVRSFHKNLLKNLYDEDHRNSQVTSAV.

It belongs to the cyclin family. Cyclin U/P subfamily. As to quaternary structure, interacts with CDKA-1. As to expression, expressed in roots, stems and flowers. Expressed in the shoot apex, leaf primordia and young leaves.

The sequence is that of Cyclin-U4-2 (CYCU4-2) from Arabidopsis thaliana (Mouse-ear cress).